A 348-amino-acid polypeptide reads, in one-letter code: Putative methylesterase 14, chloroplastic (348 aa).

2 disordered regions span residues 1–29 (MGNK…MNRS) and 60–80 (GSMS…SDPF). Residues 1 to 76 (MGNKIISMMK…GSTSTRKRTL (76 aa)) constitute a chloroplast transit peptide. Ser-77 is subject to Phosphoserine. Ser-172 serves as the catalytic Acyl-ester intermediate. Catalysis depends on charge relay system residues Asp-299 and His-327.

Belongs to the AB hydrolase superfamily. Methylesterase family.

The protein localises to the plastid. It localises to the chloroplast. Putative methylesterase. This Arabidopsis thaliana (Mouse-ear cress) protein is Putative methylesterase 14, chloroplastic.